The chain runs to 231 residues: Uracil phosphoribosyltransferase (231 aa).

GTP is bound at residue 38–42; that stretch reads KGLVR. 5-phospho-alpha-D-ribose 1-diphosphate-binding positions include arginine 87, arginine 112, and 140–148; that span reads DPMIATGST. Uracil contacts are provided by residues isoleucine 203 and 208–210; that span reads GDA. 5-phospho-alpha-D-ribose 1-diphosphate is bound at residue aspartate 209.

Belongs to the UPRTase family. Mg(2+) is required as a cofactor.

The enzyme catalyses UMP + diphosphate = 5-phospho-alpha-D-ribose 1-diphosphate + uracil. Its pathway is pyrimidine metabolism; UMP biosynthesis via salvage pathway; UMP from uracil: step 1/1. With respect to regulation, allosterically activated by GTP. Catalyzes the conversion of uracil and 5-phospho-alpha-D-ribose 1-diphosphate (PRPP) to UMP and diphosphate. This chain is Uracil phosphoribosyltransferase, found in Methanococcus maripaludis (strain DSM 14266 / JCM 13030 / NBRC 101832 / S2 / LL).